The primary structure comprises 937 residues: Protein translocase subunit SecA (937 aa).

ATP is bound by residues glutamine 87, glycine 105–threonine 109, and aspartate 494. The segment at arginine 881 to histidine 937 is disordered. Basic and acidic residues-rich tracts occupy residues glutamate 890–alanine 900 and threonine 913–glycine 927. Positions lysine 928–histidine 937 are enriched in basic residues.

Belongs to the SecA family. In terms of assembly, monomer and homodimer. Part of the essential Sec protein translocation apparatus which comprises SecA, SecYEG and auxiliary proteins SecDF. Other proteins may also be involved.

It is found in the cell membrane. It localises to the cytoplasm. The enzyme catalyses ATP + H2O + cellular proteinSide 1 = ADP + phosphate + cellular proteinSide 2.. Functionally, part of the Sec protein translocase complex. Interacts with the SecYEG preprotein conducting channel. Has a central role in coupling the hydrolysis of ATP to the transfer of proteins into and across the cell membrane, serving as an ATP-driven molecular motor driving the stepwise translocation of polypeptide chains across the membrane. The protein is Protein translocase subunit SecA of Nocardia farcinica (strain IFM 10152).